Reading from the N-terminus, the 489-residue chain is Cytochrome P450 302a1, mitochondrial (489 aa).

Cys-434 provides a ligand contact to heme.

The protein belongs to the cytochrome P450 family. It depends on heme as a cofactor. As to expression, complex coexpression pattern of dib (disembodied) and sad (shade) in the early embryo that restricts to the prothoracic gland cells of the developing ring gland during late embryogenesis. In larvae and adult, coexpression is seen in prothoracic gland and follicle cells of the ovary. In adults, coexpression is seen in the follicle cells.

It is found in the mitochondrion membrane. The enzyme catalyses 2,22-dideoxyecdysone + 2 reduced [adrenodoxin] + O2 + 2 H(+) = 2-deoxyecdysone + 2 oxidized [adrenodoxin] + H2O. The protein operates within steroid biosynthesis; ecdysteroid biosynthesis. Functionally, required for CNS development; negatively regulates glial cell division in the embryonic midline. Involved in the metabolism of insect hormones; responsible for ecdysteroid C22-hydroxylase activity. May be involved in the breakdown of synthetic insecticides. This is Cytochrome P450 302a1, mitochondrial from Drosophila melanogaster (Fruit fly).